A 225-amino-acid chain; its full sequence is Putative elongation factor 1 gamma homolog (225 aa).

One can recognise a GST C-terminal domain in the interval 94-225; the sequence is DFKTRADILR…MCETEMQPIK (132 aa).

The chain is Putative elongation factor 1 gamma homolog from Saccharomyces cerevisiae (strain ATCC 204508 / S288c) (Baker's yeast).